The following is an 805-amino-acid chain: Hypoxia-inducible factor 1-alpha (805 aa).

Residues 1–26 are disordered; that stretch reads MEGSVVVSEKKRISSERRKEKSRDAA. A compositionally biased stretch (basic and acidic residues) spans 8 to 26; sequence SEKKRISSERRKEKSRDAA. The bHLH domain occupies 17–70; it reads RRKEKSRDAARCRRSNESEVFYELSHELPLPHNVSSHLDKASIMRLDHQLPAVE. 2 PAS domains span residues 85-157 and 229-300; these read DKQL…PAKK and PHPS…TKGQ. Residues 303–346 form the PAC domain; the sequence is TGQYRMLAKKGGYVWVETQATVIYNSKNSQPQCIVCVNYVLSEV. 2 positions are modified to 4-hydroxyproline: proline 404 and proline 560. The disordered stretch occupies residues 628-669; the sequence is KESTSAPVSPYNGNRSRTSSPVRPAKAVVDKTEKSRPGTPNL. A compositionally biased stretch (polar residues) spans 629–648; it reads ESTSAPVSPYNGNRSRTSSP. At asparagine 782 the chain carries (3S)-3-hydroxyasparagine.

As to quaternary structure, efficient DNA binding requires heterodimerization of an alpha and a beta/ARNT subunit. Post-translationally, in normoxia, is hydroxylated on Pro-404 and Pro-560. The hydroxylated prolines promote interaction with VHL, initiating rapid ubiquitination and subsequent proteasomal degradation. Under hypoxia, proline hydroxylation is impaired and ubiquitination is attenuated, resulting in stabilization. In normoxia, is hydroxylated on Asn-782, thus abrogating interaction with CREBBP and EP300 and preventing transcriptional activation. In terms of processing, the iron and 2-oxoglutarate dependent 3-hydroxylation of asparagine is (S) stereospecific within HIF CTAD domains.

Its subcellular location is the cytoplasm. It is found in the nucleus. The protein resides in the nucleus speckle. Induced by reactive oxygen species (ROS). Functionally, functions as a master transcriptional regulator of the adaptive response to hypoxia. Under hypoxic conditions, activates the transcription of over 40 genes, including erythropoietin, glucose transporters, glycolytic enzymes, vascular endothelial growth factor, HILPDA, and other genes whose protein products increase oxygen delivery or facilitate metabolic adaptation to hypoxia. Plays an essential role in embryonic vascularization, tumor angiogenesis and pathophysiology of ischemic disease. This chain is Hypoxia-inducible factor 1-alpha (hif1a), found in Xenopus laevis (African clawed frog).